The chain runs to 434 residues: ATP-dependent protease ATPase subunit HslU (434 aa).

Residues Ile18, 60–65 (GVGKTE), Asp247, Glu312, and Arg384 each bind ATP.

This sequence belongs to the ClpX chaperone family. HslU subfamily. As to quaternary structure, a double ring-shaped homohexamer of HslV is capped on each side by a ring-shaped HslU homohexamer. The assembly of the HslU/HslV complex is dependent on binding of ATP.

It localises to the cytoplasm. In terms of biological role, ATPase subunit of a proteasome-like degradation complex; this subunit has chaperone activity. The binding of ATP and its subsequent hydrolysis by HslU are essential for unfolding of protein substrates subsequently hydrolyzed by HslV. HslU recognizes the N-terminal part of its protein substrates and unfolds these before they are guided to HslV for hydrolysis. The chain is ATP-dependent protease ATPase subunit HslU from Brucella melitensis biotype 2 (strain ATCC 23457).